The primary structure comprises 90 residues: Putative transcript Y 12 protein (90 aa).

This Homo sapiens (Human) protein is Putative transcript Y 12 protein (TTTY12).